The chain runs to 414 residues: Protein ABHD18 (414 aa).

An N-terminal signal peptide occupies residues 1 to 24; the sequence is MGVSKLDILYRRLLLTKLFIRGWG. 2 N-linked (GlcNAc...) asparagine glycosylation sites follow: Asn282 and Asn307.

The protein belongs to the AB hydrolase superfamily.

The protein resides in the secreted. The chain is Protein ABHD18 from Homo sapiens (Human).